The primary structure comprises 573 residues: Mucin-13 (573 aa).

Positions 1-17 are cleaved as a signal peptide; that stretch reads MKGFLLLSLSLLLVTVG. Residues 16-234 show a composition bias toward low complexity; it reads VGSSSQASST…VPSGGSTGPS (219 aa). The tract at residues 16 to 237 is disordered; the sequence is VGSSSQASST…GGSTGPSDLC (222 aa). At 18–480 the chain is on the extracellular side; sequence SSSQASSTTS…FGYSGMNCKD (463 aa). Positions 233-273 constitute an EGF-like 1 domain; it reads PSDLCNPNPCKGTASCVKLHSKHFCLCLEGYYYNSSLSSCV. Cystine bridges form between Cys237/Cys248, Cys242/Cys257, and Cys259/Cys272. Asn266, Asn316, and Asn397 each carry an N-linked (GlcNAc...) asparagine glycan. Residues 274–391 enclose the SEA domain; sequence KGTTFPGDIS…DYVSINLCDH (118 aa). EGF-like domains are found at residues 385 to 425 and 425 to 467; these read SINL…PFCV and VAVT…RKCE. Intrachain disulfides connect Cys389-Cys402, Cys394-Cys408, Cys410-Cys424, Cys429-Cys441, Cys433-Cys451, and Cys453-Cys466. The helical transmembrane segment at 481–508 threads the bilayer; sequence QFQLILTIVGTIAGALILILLIAFIVSA. Residues 509 to 573 are Cytoplasmic-facing; it reads RSKNKKKDGE…NQRSMPRPDY (65 aa). The segment at 548 to 573 is disordered; it reads PKVRTGVPSQTPNPYANQRSMPRPDY. The span at 554–567 shows a compositional bias: polar residues; the sequence is VPSQTPNPYANQRS.

As to quaternary structure, homodimer of beta subunits. Post-translationally, cleaved into two subunits, alpha and beta, probably between the first EGF domain and the SEA domain. Beta subunit contains the cytoplasmic tail and alpha subunit the extracellular tail. The homooligomerization into dimers is dependent on intrachain disulfide bonds. In terms of processing, highly N-glycosylated.

The protein resides in the cell membrane. The protein localises to the secreted. Functionally, epithelial and hemopoietic transmembrane mucin that may play a role in cell signaling. The chain is Mucin-13 (Muc13) from Mus musculus (Mouse).